Reading from the N-terminus, the 85-residue chain is U4-theraphotoxin-Hhn1a (85 aa).

Positions 1–22 (MKVTLIVILTCAAVLVLHTTAA) are cleaved as a signal peptide. The propeptide occupies 23–48 (EELEAESQLMEVGMPDTELAAVDEER). Intrachain disulfides connect cysteine 52-cysteine 66, cysteine 56-cysteine 77, and cysteine 71-cysteine 82.

The protein belongs to the neurotoxin 12 (Hwtx-2) family. 02 (Hwtx-2) subfamily. Monomer. Expressed by the venom gland.

Its subcellular location is the secreted. In terms of biological role, neurotoxin active on both insects and mammals. This Cyriopagopus hainanus (Chinese bird spider) protein is U4-theraphotoxin-Hhn1a.